Consider the following 253-residue polypeptide: Ribosomal RNA small subunit methyltransferase J (253 aa).

S-adenosyl-L-methionine is bound by residues 123–124 and Asp176; that span reads ER.

The protein belongs to the methyltransferase superfamily. RsmJ family.

It is found in the cytoplasm. It carries out the reaction guanosine(1516) in 16S rRNA + S-adenosyl-L-methionine = N(2)-methylguanosine(1516) in 16S rRNA + S-adenosyl-L-homocysteine + H(+). In terms of biological role, specifically methylates the guanosine in position 1516 of 16S rRNA. The polypeptide is Ribosomal RNA small subunit methyltransferase J (Magnetococcus marinus (strain ATCC BAA-1437 / JCM 17883 / MC-1)).